We begin with the raw amino-acid sequence, 328 residues long: UPF0421 protein SERP1427 (328 aa).

A run of 4 helical transmembrane segments spans residues L26–I46, L61–Q81, A109–F129, and L132–P152.

Belongs to the UPF0421 family.

It is found in the cell membrane. The sequence is that of UPF0421 protein SERP1427 from Staphylococcus epidermidis (strain ATCC 35984 / DSM 28319 / BCRC 17069 / CCUG 31568 / BM 3577 / RP62A).